A 316-amino-acid polypeptide reads, in one-letter code: Pantothenate kinase (316 aa).

Gly99–Ser106 contributes to the ATP binding site.

The protein belongs to the prokaryotic pantothenate kinase family.

It is found in the cytoplasm. It carries out the reaction (R)-pantothenate + ATP = (R)-4'-phosphopantothenate + ADP + H(+). It functions in the pathway cofactor biosynthesis; coenzyme A biosynthesis; CoA from (R)-pantothenate: step 1/5. The sequence is that of Pantothenate kinase (coaA) from Pasteurella multocida (strain Pm70).